A 64-amino-acid chain; its full sequence is uncharacterized protein (64 aa).

This is an uncharacterized protein from Bdellovibrio phage phiMH2K (Bacteriophage phiMH2K).